The chain runs to 409 residues: Probable aspartate/prephenate aminotransferase (409 aa).

L-aspartate is bound by residues Gly39, Trp125, and Asn175. Residue Lys239 is modified to N6-(pyridoxal phosphate)lysine. Position 375 (Arg375) interacts with L-aspartate.

Belongs to the class-I pyridoxal-phosphate-dependent aminotransferase family. Homodimer. Requires pyridoxal 5'-phosphate as cofactor.

The protein resides in the cytoplasm. It catalyses the reaction L-aspartate + 2-oxoglutarate = oxaloacetate + L-glutamate. It carries out the reaction L-arogenate + 2-oxoglutarate = prephenate + L-glutamate. In terms of biological role, catalyzes the reversible conversion of aspartate and 2-oxoglutarate to glutamate and oxaloacetate. Can also transaminate prephenate in the presence of glutamate. The protein is Probable aspartate/prephenate aminotransferase (aatA) of Rickettsia felis (strain ATCC VR-1525 / URRWXCal2) (Rickettsia azadi).